The following is a 492-amino-acid chain: Tyrosine--tRNA ligase, mitochondrial (492 aa).

Tyrosine 89 contributes to the L-tyrosine binding site. Aspartate 93 contacts ATP. The 'HIGH' region motif lies at 94-103 (PTAQSLHLGN). 5 residues coordinate L-tyrosine: aspartate 133, tyrosine 239, glutamine 243, aspartate 246, and glutamine 265. The 'KMSKS' region motif lies at 303–307 (KFGKS). Lysine 306 provides a ligand contact to ATP.

The protein belongs to the class-I aminoacyl-tRNA synthetase family. In terms of assembly, homodimer.

The protein localises to the mitochondrion matrix. The catalysed reaction is tRNA(Tyr) + L-tyrosine + ATP = L-tyrosyl-tRNA(Tyr) + AMP + diphosphate + H(+). Its function is as follows. Catalyzes the attachment of tyrosine to tRNA(Tyr) in a two-step reaction: tyrosine is first activated by ATP to form Tyr-AMP and then transferred to the acceptor end of tRNA(Tyr). The protein is Tyrosine--tRNA ligase, mitochondrial (MSY1) of Saccharomyces cerevisiae (strain ATCC 204508 / S288c) (Baker's yeast).